Here is a 158-residue protein sequence, read N- to C-terminus: 2-C-methyl-D-erythritol 2,4-cyclodiphosphate synthase (158 aa).

Positions 9 and 11 each coordinate a divalent metal cation. 4-CDP-2-C-methyl-D-erythritol 2-phosphate-binding positions include 9–11 (DVH) and 35–36 (HS). Histidine 43 lines the a divalent metal cation pocket. Residues 57–59 (DIG), 62–66 (FPDTD), 133–136 (TTTE), phenylalanine 140, and arginine 143 each bind 4-CDP-2-C-methyl-D-erythritol 2-phosphate.

It belongs to the IspF family. In terms of assembly, homotrimer. A divalent metal cation is required as a cofactor.

It catalyses the reaction 4-CDP-2-C-methyl-D-erythritol 2-phosphate = 2-C-methyl-D-erythritol 2,4-cyclic diphosphate + CMP. Its pathway is isoprenoid biosynthesis; isopentenyl diphosphate biosynthesis via DXP pathway; isopentenyl diphosphate from 1-deoxy-D-xylulose 5-phosphate: step 4/6. In terms of biological role, involved in the biosynthesis of isopentenyl diphosphate (IPP) and dimethylallyl diphosphate (DMAPP), two major building blocks of isoprenoid compounds. Catalyzes the conversion of 4-diphosphocytidyl-2-C-methyl-D-erythritol 2-phosphate (CDP-ME2P) to 2-C-methyl-D-erythritol 2,4-cyclodiphosphate (ME-CPP) with a corresponding release of cytidine 5-monophosphate (CMP). This Actinobacillus pleuropneumoniae serotype 7 (strain AP76) protein is 2-C-methyl-D-erythritol 2,4-cyclodiphosphate synthase.